Consider the following 100-residue polypeptide: Cysteine-rich venom protein VAR1 (100 aa).

The first 22 residues, 1 to 22 (MILLKLYLTLAAILCQSRGTTS), serve as a signal peptide directing secretion. Residues 41-81 (NKHNDLRRTVDPPAKNMLKMSWDNIIAESAKRAALRCNQNE) enclose the SCP domain.

This sequence belongs to the CRISP family. In terms of processing, contains 8 disulfide bonds. In terms of tissue distribution, expressed by the venom gland.

Its subcellular location is the secreted. Its function is as follows. Blocks ryanodine receptors, and potassium channels. The sequence is that of Cysteine-rich venom protein VAR1 from Varanus acanthurus (Ridge-tailed monitor).